Reading from the N-terminus, the 282-residue chain is Pantothenate synthetase (282 aa).

31–38 (MGYLHEGH) provides a ligand contact to ATP. His-38 (proton donor) is an active-site residue. Gln-62 provides a ligand contact to (R)-pantoate. Gln-62 contributes to the beta-alanine binding site. 148-151 (GEKD) is a binding site for ATP. A (R)-pantoate-binding site is contributed by Gln-154. ATP-binding positions include Val-177 and 185-188 (YSSR).

It belongs to the pantothenate synthetase family. Homodimer.

The protein resides in the cytoplasm. The enzyme catalyses (R)-pantoate + beta-alanine + ATP = (R)-pantothenate + AMP + diphosphate + H(+). It functions in the pathway cofactor biosynthesis; (R)-pantothenate biosynthesis; (R)-pantothenate from (R)-pantoate and beta-alanine: step 1/1. Catalyzes the condensation of pantoate with beta-alanine in an ATP-dependent reaction via a pantoyl-adenylate intermediate. This Aquifex aeolicus (strain VF5) protein is Pantothenate synthetase.